The following is a 166-amino-acid chain: Interferon gamma-related (166 aa).

The first 26 residues, 1–26, serve as a signal peptide directing secretion; the sequence is MYCRLNMVYLICALLLIVSLQGTVGA. An N-linked (GlcNAc...) asparagine glycan is attached at asparagine 91.

It belongs to the type II (or gamma) interferon family. As to quaternary structure, homodimer. In terms of tissue distribution, strongly expressed in spleen. Also detected at lower levels in gill, kidney, heart, brain and intestine. In immune cell populations, expressed at highest levels in peripheral blood leukocytes and at lower levels in splenocytes, granulocytes, monocytes and macrophages.

The protein resides in the secreted. Functionally, cytokine which binds to interferon gamma receptor 1 (ifngr1). Has activating effects on primary macrophages. Induces nitric oxide production and phagocytic responses in macrophages. Primes monocytes for production of reactive oxygen intermediates (ROI), although the effect is short-lived. Also has inhibitory effects on monocyte priming by ifng1 (interferon gamma 1) and tnfb (TNF-alpha 2). Stimulates phosphorylation of the JAK/STAT signal transducer stat1, but fails to induce stat1 nuclear localization. Promotes increased expression of a number of genes important for macrophage activity, including the interferon regulatory factors irf2 and irf9. This chain is Interferon gamma-related, found in Carassius auratus (Goldfish).